Consider the following 195-residue polypeptide: Holliday junction branch migration complex subunit RuvA (195 aa).

The tract at residues 1 to 63 (MIASVRGEVI…EDSMTLYGFV (63 aa)) is domain I. The interval 64-142 (DGDARDLFLT…PVSAGGGAAV (79 aa)) is domain II. The flexible linker stretch occupies residues 143 to 150 (GGHAIRGP). The tract at residues 150–195 (PVVEALVGLGFAAKQAEEATDKVLANDPEATTSSALRAALSMLGKK) is domain III.

It belongs to the RuvA family. In terms of assembly, homotetramer. Forms an RuvA(8)-RuvB(12)-Holliday junction (HJ) complex. HJ DNA is sandwiched between 2 RuvA tetramers; dsDNA enters through RuvA and exits via RuvB. An RuvB hexamer assembles on each DNA strand where it exits the tetramer. Each RuvB hexamer is contacted by two RuvA subunits (via domain III) on 2 adjacent RuvB subunits; this complex drives branch migration. In the full resolvosome a probable DNA-RuvA(4)-RuvB(12)-RuvC(2) complex forms which resolves the HJ.

The protein resides in the cytoplasm. The RuvA-RuvB-RuvC complex processes Holliday junction (HJ) DNA during genetic recombination and DNA repair, while the RuvA-RuvB complex plays an important role in the rescue of blocked DNA replication forks via replication fork reversal (RFR). RuvA specifically binds to HJ cruciform DNA, conferring on it an open structure. The RuvB hexamer acts as an ATP-dependent pump, pulling dsDNA into and through the RuvAB complex. HJ branch migration allows RuvC to scan DNA until it finds its consensus sequence, where it cleaves and resolves the cruciform DNA. In Mycolicibacterium smegmatis (strain ATCC 700084 / mc(2)155) (Mycobacterium smegmatis), this protein is Holliday junction branch migration complex subunit RuvA.